We begin with the raw amino-acid sequence, 309 residues long: Manganese-dependent inorganic pyrophosphatase (309 aa).

6 residues coordinate Mn(2+): His-9, Asp-13, Asp-15, Asp-75, His-97, and Asp-149.

As to quaternary structure, homodimer. Mn(2+) is required as a cofactor.

It localises to the cytoplasm. It catalyses the reaction diphosphate + H2O = 2 phosphate + H(+). In Bacillus subtilis (strain 168), this protein is Manganese-dependent inorganic pyrophosphatase (ppaC).